Consider the following 398-residue polypeptide: Na(+)/H(+) antiporter NhaA (398 aa).

Transmembrane regions (helical) follow at residues 21–41 (AGGI…NSPL), 56–76 (LSVS…LVGL), 94–114 (VLPG…YVFI), 124–144 (GWAI…SLLG), 153–173 (VFLT…IAIF), 176–196 (SGLS…LVVL), 201–221 (VMTL…VLKS), 263–283 (IVPF…SLAG), 284–304 (LSLG…LVVG), 306–326 (LVGV…DLPA), 333–353 (MIGI…IGLL), and 367–387 (VGIL…LLMA).

This sequence belongs to the NhaA Na(+)/H(+) (TC 2.A.33) antiporter family.

It localises to the cell inner membrane. It catalyses the reaction Na(+)(in) + 2 H(+)(out) = Na(+)(out) + 2 H(+)(in). Na(+)/H(+) antiporter that extrudes sodium in exchange for external protons. In Mesorhizobium japonicum (strain LMG 29417 / CECT 9101 / MAFF 303099) (Mesorhizobium loti (strain MAFF 303099)), this protein is Na(+)/H(+) antiporter NhaA.